We begin with the raw amino-acid sequence, 864 residues long: Leucine--tRNA ligase (864 aa).

The 'HIGH' region motif lies at 42–52 (PYPSGKLHMGH). The 'KMSKS' region motif lies at 624 to 628 (KMSKS). Residue Lys627 coordinates ATP.

It belongs to the class-I aminoacyl-tRNA synthetase family.

Its subcellular location is the cytoplasm. The enzyme catalyses tRNA(Leu) + L-leucine + ATP = L-leucyl-tRNA(Leu) + AMP + diphosphate. This chain is Leucine--tRNA ligase, found in Paraburkholderia phymatum (strain DSM 17167 / CIP 108236 / LMG 21445 / STM815) (Burkholderia phymatum).